The primary structure comprises 304 residues: Phosphonates import ATP-binding protein PhnC 1 (304 aa).

Residues 4–240 form the ABC transporter domain; sequence VSLQNVTKLF…VIDDLYYAGS (237 aa). 37 to 44 contacts ATP; it reads GPSGAGKS. A disordered region spans residues 240–304; it reads SESTPVSHGD…TETDTGEAQL (65 aa). A compositionally biased stretch (polar residues) spans 263–272; that stretch reads TSVSSDMETT. The span at 289 to 304 shows a compositional bias: acidic residues; sequence TDTETDTETDTGEAQL.

Belongs to the ABC transporter superfamily. Phosphonates importer (TC 3.A.1.9.1) family. The complex is composed of two ATP-binding proteins (PhnC), two transmembrane proteins (PhnE) and a solute-binding protein (PhnD).

Its subcellular location is the cell membrane. The enzyme catalyses phosphonate(out) + ATP + H2O = phosphonate(in) + ADP + phosphate + H(+). In terms of biological role, part of the ABC transporter complex PhnCDE involved in phosphonates import. Responsible for energy coupling to the transport system. The chain is Phosphonates import ATP-binding protein PhnC 1 from Haloquadratum walsbyi (strain DSM 16790 / HBSQ001).